A 404-amino-acid polypeptide reads, in one-letter code: RING-H2 finger protein ATL11 (404 aa).

Positions Met1 to Gly36 are cleaved as a signal peptide. The chain crosses the membrane as a helical span at residues Ala64–Ile84. The segment at Cys144–Arg186 adopts an RING-type; atypical zinc-finger fold. Disordered stretches follow at residues Pro339–Ser361 and Val385–Val404.

This sequence belongs to the RING-type zinc finger family. ATL subfamily.

The protein localises to the membrane. The catalysed reaction is S-ubiquitinyl-[E2 ubiquitin-conjugating enzyme]-L-cysteine + [acceptor protein]-L-lysine = [E2 ubiquitin-conjugating enzyme]-L-cysteine + N(6)-ubiquitinyl-[acceptor protein]-L-lysine.. The protein operates within protein modification; protein ubiquitination. The chain is RING-H2 finger protein ATL11 (ATL11) from Arabidopsis thaliana (Mouse-ear cress).